A 169-amino-acid chain; its full sequence is Protein pid-1 (169 aa).

Over residues 137 to 151 (SGSPRITPQKHTPVS) the composition is skewed to polar residues. Positions 137-169 (SGSPRITPQKHTPVSANHKPARSIFDDIPSNIA) are disordered.

As to quaternary structure, component of the pid-1 variant of the PETISCO complex (also called the pid-3, erh-2, tofu-6, and ife-3 small RNA complex) containing at least pid-1, tofu-6, ife-3, pid-3, and erh-2, which is required for the biogenesis of a class of 21 nucleotide PIWI-interacting RNAs (piRNAs) that possess a uracil residue at the 5'-end (also called 21U-RNAs). Within the complex interacts with pid-3; the interaction is direct. Within the complex interacts with erh-2. Within the complex interacts with tofu-6. As to expression, expressed predominantly in the germline (at protein level).

The protein localises to the cytoplasm. The protein resides in the nucleus. Its subcellular location is the perinuclear region. Its function is as follows. Component of the pid-1 variant of the PETISCO complex which is required for the biogenesis of a class of 21 nucleotide PIWI-interacting RNAs (piRNAs) that possess a uracil residue at the 5'-end (also called 21U-RNAs). Within the complex acts as an adapter which binds to the complex via erh-2. Involved in the biogenesis of 21U-RNAs which guide the piwi protein prg-1 to its DNA targets for silencing. Plays a role in small RNA-directed transgenerational epigenetic inheritance. This is Protein pid-1 from Caenorhabditis elegans.